The chain runs to 520 residues: Protein root UVB sensitive 4 (520 aa).

The next 2 membrane-spanning stretches (helical) occupy residues 275–295 and 301–321; these read IQTV…NMLF and LQAC…LLGI.

Belongs to the RUS1 family.

It is found in the membrane. The polypeptide is Protein root UVB sensitive 4 (Arabidopsis thaliana (Mouse-ear cress)).